Here is a 759-residue protein sequence, read N- to C-terminus: Glycerol-3-phosphate O-acyltransferase 1 (759 aa).

Residues 1 to 48 lie on the Lumenal side of the membrane; the sequence is MPAPKLTEKFASSKSTQKTTNYSSIEAKSVKTSADQAYIYQEPSATKK. Residues 49 to 69 form a helical membrane-spanning segment; the sequence is ILYSIATWLLYNIFHCFFREI. Over 70 to 434 the chain is Cytoplasmic; that stretch reads RGRGSFKVPQ…AKVNFAKNLG (365 aa). The HXXXXD motif motif lies at 414 to 419; it reads HYNLPD. A helical membrane pass occupies residues 435–449; the sequence is LVFFRSIGLCILFSL. Residue Ala450 is a topological domain, lumenal. Residues 451–465 form a helical membrane-spanning segment; that stretch reads MPGIIMFSPVFILAK. Residues 466–493 are Cytoplasmic-facing; that stretch reads RISQEKARTALSKSTVKIKANDVIATWK. The chain crosses the membrane as a helical span at residues 494 to 514; that stretch reads ILIGMGFAPLLYIFWSVLITY. The Lumenal portion of the chain corresponds to 515 to 523; sequence YLRHKPWNK. The helical transmembrane segment at 524 to 544 threads the bilayer; the sequence is IYVFSGSYISCVIVTYSALIV. Over 545-759 the chain is Cytoplasmic; the sequence is GDIGMDGFKS…EEEEGKEGDA (215 aa). Disordered stretches follow at residues 613-667, 684-705, and 729-759; these read EEDR…SLVN, RKSESSLASTSVAPSSSSEFEV, and IGENTAREEEEEEEEEEEEEEEEEEGKEGDA. A compositionally biased stretch (basic and acidic residues) spans 647–659; sequence RDNHDAYEHHNQD. A compositionally biased stretch (low complexity) spans 688-702; sequence SSLASTSVAPSSSSE. A compositionally biased stretch (acidic residues) spans 736–759; sequence EEEEEEEEEEEEEEEEEEGKEGDA.

The protein belongs to the GPAT/DAPAT family.

The protein localises to the endoplasmic reticulum membrane. The enzyme catalyses sn-glycerol 3-phosphate + an acyl-CoA = a 1-acyl-sn-glycero-3-phosphate + CoA. The catalysed reaction is dihydroxyacetone phosphate + an acyl-CoA = a 1-acylglycerone 3-phosphate + CoA. It catalyses the reaction sn-glycerol 3-phosphate + hexadecanoyl-CoA = 1-hexadecanoyl-sn-glycero-3-phosphate + CoA. It carries out the reaction (9Z)-hexadecenoyl-CoA + sn-glycerol 3-phosphate = 1-(9Z-hexadecenoyl)-sn-glycero-3-phosphate + CoA. The enzyme catalyses sn-glycerol 3-phosphate + octadecanoyl-CoA = 1-octadecanoyl-sn-glycero-3-phosphate + CoA. The catalysed reaction is sn-glycerol 3-phosphate + (9Z)-octadecenoyl-CoA = 1-(9Z-octadecenoyl)-sn-glycero-3-phosphate + CoA. It participates in phospholipid metabolism; CDP-diacylglycerol biosynthesis; CDP-diacylglycerol from sn-glycerol 3-phosphate: step 1/3. Dual substrate-specific glycerol-3-phosphate/dihydroxyacetone phosphate sn-1 acyltransferase, catalyzing the first and committed reaction in the de novo synthesis of glycerophospholipids and triacylglycerols (TAGs). Prefers Gly-3-P over dihydroxyacetone phosphate and has a marked preference for 16-carbon fatty acyl chains. Transfers a fatty acid from fatty acyl-CoA to the sn-1 position of glycerol-3-phosphate to produce lysophosphatidic acid (LysoPA). These lipids not only are precursors of glycerolipids, but also are dynamic components of signal transduction systems that control cell physiology. SCT1 is the primary supplier of diacylglycerols (DAG), used mainly in TAG synthesis and phosphatidylcholine (PC) synthesis through the CDP-choline pathway. Regulates fatty acid desaturation, that is, the ratio of unsaturated versus saturated fatty acyl chains, by competing with the desaturase OLE1 for the common substrate C16:0-CoA. Sequesters C16:0-CoA into lipids, thereby shielding it from desaturation by OLE1. The sequence is that of Glycerol-3-phosphate O-acyltransferase 1 from Saccharomyces cerevisiae (strain ATCC 204508 / S288c) (Baker's yeast).